Reading from the N-terminus, the 417-residue chain is UDP-N-acetylglucosamine 1-carboxyvinyltransferase (417 aa).

22–23 (KN) provides a ligand contact to phosphoenolpyruvate. Position 93 (Arg93) interacts with UDP-N-acetyl-alpha-D-glucosamine. Cys117 serves as the catalytic Proton donor. Cys117 bears the 2-(S-cysteinyl)pyruvic acid O-phosphothioketal mark. Residues 122–126 (RPVDQ), Asp305, and Ile327 each bind UDP-N-acetyl-alpha-D-glucosamine.

Belongs to the EPSP synthase family. MurA subfamily.

The protein localises to the cytoplasm. The enzyme catalyses phosphoenolpyruvate + UDP-N-acetyl-alpha-D-glucosamine = UDP-N-acetyl-3-O-(1-carboxyvinyl)-alpha-D-glucosamine + phosphate. Its pathway is cell wall biogenesis; peptidoglycan biosynthesis. Functionally, cell wall formation. Adds enolpyruvyl to UDP-N-acetylglucosamine. The polypeptide is UDP-N-acetylglucosamine 1-carboxyvinyltransferase (Nitrosomonas europaea (strain ATCC 19718 / CIP 103999 / KCTC 2705 / NBRC 14298)).